The primary structure comprises 70 residues: UPF0519 protein D (70 aa).

Belongs to the UPF0519 family.

This chain is UPF0519 protein D, found in Dictyostelium discoideum (Social amoeba).